We begin with the raw amino-acid sequence, 642 residues long: Sec1 family domain-containing protein 1 (642 aa).

Ala-2 carries the N-acetylalanine modification. Ser-37, Ser-303, and Ser-528 each carry phosphoserine.

The protein belongs to the STXBP/unc-18/SEC1 family. As to quaternary structure, interacts with STX17. Interacts with STX5A. Interacts with the COG complex via COG4.

The protein localises to the cytoplasm. It localises to the endoplasmic reticulum membrane. It is found in the golgi apparatus. Its subcellular location is the golgi stack membrane. Functionally, plays a role in SNARE-pin assembly and Golgi-to-ER retrograde transport via its interaction with COG4. Involved in vesicular transport between the endoplasmic reticulum and the Golgi. The chain is Sec1 family domain-containing protein 1 (SCFD1) from Homo sapiens (Human).